The chain runs to 66 residues: Disintegrin EO5B (66 aa).

Residues 1-65 form the Disintegrin domain; it reads NSAHPCCDPV…DCPRNPYKGK (65 aa). 4 cysteine pairs are disulfide-bonded: Cys6-Cys29, Cys20-Cys26, Cys25-Cys50, and Cys38-Cys57. A Cell attachment site; atypical (VGD) motif is present at residues 42 to 44; it reads VGD.

The protein belongs to the disintegrin family. Dimeric disintegrin subfamily. As to quaternary structure, heterodimer with EO4A or EO5A; disulfide-linked. In terms of tissue distribution, expressed by the venom gland.

It localises to the secreted. In terms of biological role, poor inhibitor of platelet aggregation. When it dimerizes with EO4A, it inhibits the adhesion of cells expressing the RGD-dependent integrin alpha-5/beta-1 (ITGA5/ITGB1) to immobilized fibronectin. When it dimerizes with EO5A, it inhibits the adhesion of the alpha-4/beta-1 (ITGA4/ITGB1) integrin to VCAM-1. When it dimerizes either with EO4A or EO5A, the inhibition on alpha-IIb/beta-3 (ITGA2B/ITGB3) is low. This chain is Disintegrin EO5B, found in Echis ocellatus (Ocellated saw-scaled viper).